We begin with the raw amino-acid sequence, 70 residues long: MTTIRVKDNEPFEVAMRRFKRTMEKTGLLTELRAREFYEKPTAERKRKKAAAVKRHFKRLRGQMLPKKFY.

Belongs to the bacterial ribosomal protein bS21 family.

In Paraburkholderia xenovorans (strain LB400), this protein is Small ribosomal subunit protein bS21B.